A 409-amino-acid chain; its full sequence is NADH-quinone oxidoreductase subunit D (409 aa).

It belongs to the complex I 49 kDa subunit family. NDH-1 is composed of 14 different subunits. Subunits NuoB, C, D, E, F, and G constitute the peripheral sector of the complex.

The protein localises to the cell inner membrane. It catalyses the reaction a quinone + NADH + 5 H(+)(in) = a quinol + NAD(+) + 4 H(+)(out). Functionally, NDH-1 shuttles electrons from NADH, via FMN and iron-sulfur (Fe-S) centers, to quinones in the respiratory chain. The immediate electron acceptor for the enzyme in this species is believed to be ubiquinone. Couples the redox reaction to proton translocation (for every two electrons transferred, four hydrogen ions are translocated across the cytoplasmic membrane), and thus conserves the redox energy in a proton gradient. This Helicobacter pylori (strain Shi470) protein is NADH-quinone oxidoreductase subunit D.